The chain runs to 257 residues: Probable enoyl-CoA hydratase echA8 (257 aa).

The protein belongs to the enoyl-CoA hydratase/isomerase family.

It carries out the reaction a (3S)-3-hydroxyacyl-CoA = a (2E)-enoyl-CoA + H2O. The enzyme catalyses a 4-saturated-(3S)-3-hydroxyacyl-CoA = a (3E)-enoyl-CoA + H2O. Could possibly oxidize fatty acids using specific components. This Mycobacterium tuberculosis (strain CDC 1551 / Oshkosh) protein is Probable enoyl-CoA hydratase echA8 (echA8).